The following is a 66-amino-acid chain: Large ribosomal subunit protein bL35 (66 aa).

The tract at residues 21-40 is disordered; it reads KIKSTQSAKRHGMTKRSKRS. The span at 28-40 shows a compositional bias: basic residues; the sequence is AKRHGMTKRSKRS.

It belongs to the bacterial ribosomal protein bL35 family.

This is Large ribosomal subunit protein bL35 from Ehrlichia canis (strain Jake).